Consider the following 147-residue polypeptide: CRISP-1 (147 aa).

Belongs to the CRISP family. Expressed by the venom gland.

It localises to the secreted. The protein is CRISP-1 of Phoneutria keyserlingi (Brazilian wandering spider).